The following is a 426-amino-acid chain: Histidine--tRNA ligase (426 aa).

This sequence belongs to the class-II aminoacyl-tRNA synthetase family. As to quaternary structure, homodimer.

The protein resides in the cytoplasm. It carries out the reaction tRNA(His) + L-histidine + ATP = L-histidyl-tRNA(His) + AMP + diphosphate + H(+). This Geobacillus thermodenitrificans (strain NG80-2) protein is Histidine--tRNA ligase.